The chain runs to 177 residues: Alkyl hydroperoxide reductase AhpD (177 aa).

C130 serves as the catalytic Proton donor. C130 and C133 are oxidised to a cystine. C133 functions as the Cysteine sulfenic acid (-SOH) intermediate in the catalytic mechanism.

Belongs to the AhpD family. In terms of assembly, homotrimer.

It catalyses the reaction N(6)-[(R)-dihydrolipoyl]-L-lysyl-[lipoyl-carrier protein] + a hydroperoxide = N(6)-[(R)-lipoyl]-L-lysyl-[lipoyl-carrier protein] + an alcohol + H2O. In terms of biological role, antioxidant protein with alkyl hydroperoxidase activity. Required for the reduction of the AhpC active site cysteine residues and for the regeneration of the AhpC enzyme activity. This chain is Alkyl hydroperoxide reductase AhpD, found in Mycobacterium bovis (strain ATCC BAA-935 / AF2122/97).